The sequence spans 446 residues: Endoplasmic reticulum membrane adapter protein XK (446 aa).

The Cytoplasmic segment spans residues 1 to 2 (MK). Residues 3–23 (FPASVIASVFLFVAETAAALY) traverse the membrane as a helical segment. Residues 24–37 (LSSTYRSAGDRMWQ) are Extracellular-facing. A helical membrane pass occupies residues 38-58 (VLTLLFSLMPCALVQFTLLFV). Residues 59 to 68 (HRDLSRDRPL) are Cytoplasmic-facing. Residues 69-89 (ALLMHLLQLGPLYRCCEVFCI) form a helical membrane-spanning segment. Residues 90–140 (YCQSDQNEEPYVSITKKRQMPKDGLSEEVEKEVGQAEGKLITHRSAFSRAS) are Extracellular-facing. Phosphoserine is present on Ser-115. The helical transmembrane segment at 141–161 (VIQAFLGSAPQLTLQLYITVL) threads the bilayer. Residues 162–171 (EQNITTGRCF) are Cytoplasmic-facing. Residues 172–192 (IMTLSLLSIVYGALRCNILAI) traverse the membrane as a helical segment. Topologically, residues 193 to 208 (KIKYDEYEVKVKPLAY) are extracellular. The helical transmembrane segment at 209-229 (VCIFLWRSFEIATRVIVLVLF) threads the bilayer. The Cytoplasmic segment spans residues 230–235 (TSVLKI). Residues 236–256 (WVVAVILVNFFSFFLYPWIVF) traverse the membrane as a helical segment. Residues 257 to 277 (WCSGSPFPENIEKALSRVGTT) are Extracellular-facing. The chain crosses the membrane as a helical span at residues 278–298 (IVLCFLTLLYAGINMFCWSAV). Residues 299-317 (QLKIDNPELISKSQNWYRL) are Cytoplasmic-facing. A helical transmembrane segment spans residues 318–338 (LIYYMTRFIENSVLLLLWYFF). At 339-349 (KTDIYMYVCAP) the chain is on the extracellular side. Residues 350–370 (LLILQLLIGYCTGILFMLVFY) traverse the membrane as a helical segment. Residues 371–446 (QFFHPCKKLF…IWTAVDLCSA (76 aa)) are Cytoplasmic-facing.

The protein belongs to the XK family. In terms of assembly, heterodimer with Kell; disulfide-linked. Interacts with VPS13A.

The protein resides in the endoplasmic reticulum membrane. Recruits the lipid transfer protein VPS13A from lipid droplets to the endoplasmic reticulum (ER) membrane. The chain is Endoplasmic reticulum membrane adapter protein XK from Mus musculus (Mouse).